A 234-amino-acid polypeptide reads, in one-letter code: Glycoprotein BDLF3 (234 aa).

The first 28 residues, 1–28 (MAHARDKAGAVMAMILICETSLIWTSSG), serve as a signal peptide directing secretion. A disordered region spans residues 29–62 (SSTASAGNVTGTTAVTTPSPSASGPSTNQSTTLT). Asn36, Asn56, Asn77, Asn96, Asn101, Asn110, Asn127, Asn144, and Asn159 each carry an N-linked (GlcNAc...) asparagine; by host glycan. Residues 116–138 (AGTGTSTGVTSNVTTRSSSTTSA) are disordered. Residues 187–207 (LVFVGLTFLMLILIFAAGLMM) form a helical membrane-spanning segment.

It belongs to the Epstein-Barr virus BDLF3 protein family.

The protein localises to the membrane. The polypeptide is Glycoprotein BDLF3 (Homo sapiens (Human)).